The primary structure comprises 173 residues: Protein GrpE (173 aa).

Over residues methionine 1 to threonine 20 the composition is skewed to basic and acidic residues. A disordered region spans residues methionine 1–serine 23.

It belongs to the GrpE family. In terms of assembly, homodimer.

It localises to the cytoplasm. Functionally, participates actively in the response to hyperosmotic and heat shock by preventing the aggregation of stress-denatured proteins, in association with DnaK and GrpE. It is the nucleotide exchange factor for DnaK and may function as a thermosensor. Unfolded proteins bind initially to DnaJ; upon interaction with the DnaJ-bound protein, DnaK hydrolyzes its bound ATP, resulting in the formation of a stable complex. GrpE releases ADP from DnaK; ATP binding to DnaK triggers the release of the substrate protein, thus completing the reaction cycle. Several rounds of ATP-dependent interactions between DnaJ, DnaK and GrpE are required for fully efficient folding. The protein is Protein GrpE of Thiobacillus denitrificans (strain ATCC 25259 / T1).